Consider the following 202-residue polypeptide: Peptide deformylase (202 aa).

The segment at 1-24 (MAGSFAQLAKNAEKKKPSISVSKE) is disordered. Fe cation contacts are provided by Cys121 and His163. Glu164 is a catalytic residue. His167 contacts Fe cation.

It belongs to the polypeptide deformylase family. The cofactor is Fe(2+).

The enzyme catalyses N-terminal N-formyl-L-methionyl-[peptide] + H2O = N-terminal L-methionyl-[peptide] + formate. Functionally, removes the formyl group from the N-terminal Met of newly synthesized proteins. Requires at least a dipeptide for an efficient rate of reaction. N-terminal L-methionine is a prerequisite for activity but the enzyme has broad specificity at other positions. In Prochlorococcus marinus (strain NATL1A), this protein is Peptide deformylase.